Consider the following 786-residue polypeptide: von Willebrand factor A domain-containing protein 5A (786 aa).

One can recognise a VIT domain in the interval 1–131; that stretch reads MVHFCGLLTL…KAAVTLKYVQ (131 aa). A VWFA domain is found at 281-462; it reads EFIFLMDRSG…KALRTLKRSL (182 aa).

Expressed at low level in many tissues. Not expressed in 80% of tumor cell lines tested.

Its function is as follows. May play a role in tumorigenesis as a tumor suppressor. Altered expression of this protein and disruption of the molecular pathway it is involved in, may contribute directly to or modify tumorigenesis. The protein is von Willebrand factor A domain-containing protein 5A (VWA5A) of Homo sapiens (Human).